The chain runs to 490 residues: Glutamate--tRNA ligase (490 aa).

Positions 13–23 (PSPTGTPHVGL) match the 'HIGH' region motif. Residues 257-261 (KLSKR) carry the 'KMSKS' region motif. Lys-260 contributes to the ATP binding site.

The protein belongs to the class-I aminoacyl-tRNA synthetase family. Glutamate--tRNA ligase type 1 subfamily. In terms of assembly, monomer.

Its subcellular location is the cytoplasm. The enzyme catalyses tRNA(Glu) + L-glutamate + ATP = L-glutamyl-tRNA(Glu) + AMP + diphosphate. Its function is as follows. Catalyzes the attachment of glutamate to tRNA(Glu) in a two-step reaction: glutamate is first activated by ATP to form Glu-AMP and then transferred to the acceptor end of tRNA(Glu). This is Glutamate--tRNA ligase from Mycobacterium tuberculosis (strain ATCC 25177 / H37Ra).